Consider the following 1771-residue polypeptide: Fatty acid synthase alpha subunit pkiB (1771 aa).

Residues 108 to 130 show a composition bias toward polar residues; the sequence is SQPTQPQFEPTSPSHLTKRSPSP. A disordered region spans residues 108 to 133; sequence SQPTQPQFEPTSPSHLTKRSPSPSKA. The 79-residue stretch at 143 to 221 folds into the Carrier domain; the sequence is ELTLQAGHVI…ESFQPEFSGI (79 aa). S181 is subject to O-(pantetheine 4'-phosphoryl)serine. Positions 575-771 are beta-ketoacyl reductase; it reads HKAVLVTGAG…CGAVIGWTRG (197 aa). A Ketosynthase family 3 (KS3) domain is found at 1011–1531; that stretch reads KELLHEVAVE…QKGAINIMVS (521 aa). Active-site for beta-ketoacyl synthase activity residues include C1197, H1416, and H1457. Mg(2+) is bound by residues D1650, V1651, and E1652. Residues 1650-1652, Y1676, S1686, 1695-1705, 1719-1722, and 1753-1755 contribute to the acetyl-CoA site; these read DVE, EAAFKSLQTTS, EVGG, and ISH. Residues S1754 and H1755 each contribute to the Mg(2+) site.

The protein belongs to the thiolase-like superfamily. Fungal fatty acid synthetase subunit alpha family. In terms of assembly, [Alpha(6)beta(6)] hexamers of two multifunctional subunits (alpha and beta).

The catalysed reaction is acetyl-CoA + n malonyl-CoA + 2n NADPH + 4n H(+) = a long-chain-acyl-CoA + n CoA + n CO2 + 2n NADP(+).. It carries out the reaction a fatty acyl-[ACP] + malonyl-[ACP] + H(+) = a 3-oxoacyl-[ACP] + holo-[ACP] + CO2. The enzyme catalyses a (3R)-hydroxyacyl-[ACP] + NADP(+) = a 3-oxoacyl-[ACP] + NADPH + H(+). The protein operates within secondary metabolite biosynthesis. Functionally, fatty acid synthase alpha subunit; part of the pki gene cluster that mediates the biosynthesis of 2,4-dihydroxy-3-methyl-6-(2-oxoundecyl)benzaldehyde. The first step in the pathway is the generation of the decanoyl starter unit by the FAS composed of subunits pkiB and pkiC, which is then transferred directly from the FAS to the SAT domain of the non-reducing polyketide synthase pkiA. PkiA condenses the decanoyyl starter unit with 4 malonyl-CoA units and performs one methylation step to yield 2,4-dihydroxy-3-methyl-6-(2-oxoundecyl)benzaldehyde. This Emericella nidulans (strain FGSC A4 / ATCC 38163 / CBS 112.46 / NRRL 194 / M139) (Aspergillus nidulans) protein is Fatty acid synthase alpha subunit pkiB.